The sequence spans 839 residues: MAQFDTEYQRLEASYSDSPPGEEDLLVHVPEGSKSPWHHIENLDLFFSRVYNLHQKNGFTCMLIGEIFELMQFLFVVAFTTFLVSCVDYDILFANKMVNHSLHPTEPVKVTLPDAFLPAQVCSARIQENGSLITILVIAGVFWVHRLIKFIYNICCYWEIHSFYLHALRIPMSALPYCTWQEVQARIVQTQKEHQICIHKRELTELDIYHRILRFQNYMVALVNKSLLPLRFRLPGLGEVVFFTRGLKYNFELILFWGPGSLFLNEWSLKAEYKRGGQRLELAQRLSNRILWIGIANFLLCPLILIWQILYAFFSYAEVLKREPGALGARCWSLYGRCYLRHFNELEHELQSRLNRGYKPASKYMNCFLSPLLTLLAKNCAFFAGSILAVLIALTIYDEDVLAVEHVLTTVTLLGVTVTVCRSFIPDQHMVFCPEQLLRVILAHIHYMPDHWQGNAHRSQTRDEFAQLFQYKAVFILEELLSPIVTPLILIFCLRPRALEIIDFFRNFTVEVVGVGDTCSFAQMDVRQHGHPQWLSGGQTEASVYQQAEDGKTELSLMHFAITNPGWQPPRESTAFLGFLKEQVQRDGAAAGLAQGGLLPENALFTSIQSLQSESEPLSLIANVVAGSSCRGPPLPRDLQGSRHRAEVASALRSFSPLQPGQAPTGRAPSTMTGSGVDARTASSGSSVWEGQLQSLVLSEYASTEMSLHALYMHQLHKQQAQAEPERHVWHRRESDESGESAPEEGGEGARATQPIPRSASYPCAAPRPGAPETTALQGGFQRRYGGITDPGTVPRAPSHFSRLPLGGWAEDGQSASRHPEPVPEEGSEDELPPQVHKV.

The segment at 1-21 (MAQFDTEYQRLEASYSDSPPG) is disordered. Residue alanine 2 is modified to N-acetylalanine. Residues 2–61 (AQFDTEYQRLEASYSDSPPGEEDLLVHVPEGSKSPWHHIENLDLFFSRVYNLHQKNGFTC) lie on the Cytoplasmic side of the membrane. A Tyrosine-based sorting signal motif is present at residues 8–11 (YQRL). Serine 14, serine 16, and serine 18 each carry phosphoserine. A helical transmembrane segment spans residues 62-84 (MLIGEIFELMQFLFVVAFTTFLV). The Lumenal portion of the chain corresponds to 85–128 (SCVDYDILFANKMVNHSLHPTEPVKVTLPDAFLPAQVCSARIQE). An N-linked (GlcNAc...) asparagine glycan is attached at asparagine 99. The helical transmembrane segment at 129–154 (NGSLITILVIAGVFWVHRLIKFIYNI) threads the bilayer. Over 155-290 (CCYWEIHSFY…ELAQRLSNRI (136 aa)) the chain is Cytoplasmic. The stretch at 291–301 (LWIGIANFLLC) is an intramembrane region. Residues 302 to 319 (PLILIWQILYAFFSYAEV) are Cytoplasmic-facing. An intramembrane segment occupies 320–328 (LKREPGALG). Residues 329-371 (ARCWSLYGRCYLRHFNELEHELQSRLNRGYKPASKYMNCFLSP) are Cytoplasmic-facing. A helical membrane pass occupies residues 372-397 (LLTLLAKNCAFFAGSILAVLIALTIY). Over 398 to 406 (DEDVLAVEH) the chain is Lumenal. The chain crosses the membrane as a helical span at residues 407 to 424 (VLTTVTLLGVTVTVCRSF). Residues 425–470 (IPDQHMVFCPEQLLRVILAHIHYMPDHWQGNAHRSQTRDEFAQLFQ) are Cytoplasmic-facing. An intramembrane segment occupies 471-480 (YKAVFILEEL). The Cytoplasmic segment spans residues 481 to 483 (LSP). Residues 484–492 (IVTPLILIF) lie within the membrane without spanning it. Residues 493 to 839 (CLRPRALEII…DELPPQVHKV (347 aa)) are Cytoplasmic-facing. Phosphoserine occurs at positions 656, 735, 738, 741, and 828. 2 disordered regions span residues 656-688 (SPLQPGQAPTGRAPSTMTGSGVDARTASSGSSV) and 719-839 (QQAQ…VHKV). A compositionally biased stretch (basic and acidic residues) spans 724–736 (EPERHVWHRRESD). 2 stretches are compositionally biased toward acidic residues: residues 737-747 (ESGESAPEEGG) and 823-832 (VPEEGSEDEL).

It belongs to the ATG9 family. As to quaternary structure, homotrimer; forms a homotrimer with a central pore that forms a path between the two membrane leaflets. Interacts (via cytoplasmic its C-terminus) with ATG2A. Interacts with SUPT20H. Interacts (via the tyrosine-based sorting signal motif) with AP4M1; promoting association with the AP-4 complex. Interacts with ARFIP1 and ARFIP2. Interacts with PI4K2A and PI4KB. Interacts with ATG4A; the interaction is direct and promotes ATG9A trafficking. In terms of processing, ufmylated in a DDRGK1 dependent manner.

The protein localises to the preautophagosomal structure membrane. It is found in the cytoplasmic vesicle. The protein resides in the autophagosome membrane. It localises to the golgi apparatus. Its subcellular location is the trans-Golgi network membrane. The protein localises to the late endosome membrane. It is found in the recycling endosome membrane. The protein resides in the endoplasmic reticulum membrane. It localises to the mitochondrion membrane. The catalysed reaction is a 1,2-diacyl-sn-glycero-3-phosphocholine(in) = a 1,2-diacyl-sn-glycero-3-phosphocholine(out). The enzyme catalyses a 1,2-diacyl-sn-glycero-3-phospho-L-serine(in) = a 1,2-diacyl-sn-glycero-3-phospho-L-serine(out). It catalyses the reaction a 1,2-diacyl-sn-glycero-3-phosphoethanolamine(in) = a 1,2-diacyl-sn-glycero-3-phosphoethanolamine(out). Functionally, phospholipid scramblase involved in autophagy by mediating autophagosomal membrane expansion. Cycles between the preautophagosomal structure/phagophore assembly site (PAS) and the cytoplasmic vesicle pool and supplies membrane for the growing autophagosome. Lipid scramblase activity plays a key role in preautophagosomal structure/phagophore assembly by distributing the phospholipids that arrive through ATG2 (ATG2A or ATG2B) from the cytoplasmic to the luminal leaflet of the bilayer, thereby driving autophagosomal membrane expansion. Also required to supply phosphatidylinositol 4-phosphate to the autophagosome initiation site by recruiting the phosphatidylinositol 4-kinase beta (PI4KB) in a process dependent on ARFIP2, but not ARFIP1. In addition to autophagy, also plays a role in necrotic cell death. The sequence is that of Autophagy-related protein 9A from Bos taurus (Bovine).